The chain runs to 127 residues: Fluoride-specific ion channel FluC (127 aa).

A run of 4 helical transmembrane segments spans residues 1–21 (MMSYLIVFFGAGIGGMARHMV), 32–52 (EFPFGTLFINMLGSFLIGAVV), 71–91 (TGILGGFTTFSAFSLETVLLY), and 96–116 (VFLAASYAVASVTLSVGALLL). Residues G75 and T78 each coordinate Na(+).

It belongs to the fluoride channel Fluc/FEX (TC 1.A.43) family.

The protein localises to the cell inner membrane. The catalysed reaction is fluoride(in) = fluoride(out). Its activity is regulated as follows. Na(+) is not transported, but it plays an essential structural role and its presence is essential for fluoride channel function. Functionally, fluoride-specific ion channel. Important for reducing fluoride concentration in the cell, thus reducing its toxicity. This Granulibacter bethesdensis (strain ATCC BAA-1260 / CGDNIH1) protein is Fluoride-specific ion channel FluC.